The primary structure comprises 149 residues: Probable glycine-rich RNA-binding protein 1 (149 aa).

Positions 8–83 (YRCFVGGLAW…LDGRNITAQA (76 aa)) constitute an RRM domain. The segment at 80–149 (TAQARGSGTR…GRSEGGSWRN (70 aa)) is disordered. Composition is skewed to gly residues over residues 87–101 (GTRGGMVGGYGSGGY), 110–123 (YNRGGGGGYGGGYG), and 131–143 (YGDGGYGGQGRSE).

The protein belongs to the GR-RBP family.

Its function is as follows. Possibly has a role in RNA transcription or processing during stress. This Arabidopsis thaliana (Mouse-ear cress) protein is Probable glycine-rich RNA-binding protein 1 (RBG1).